We begin with the raw amino-acid sequence, 111 residues long: Natriuretic peptide TNP-b (111 aa).

The signal sequence occupies residues 1–27 (MVGLSRLAGGGLLLLLLLALLPLALDG). Residues 28–71 (KPAPLPQALPEALAGGTTALRRDVTEEQQQQLVAEESSGPAAGR) constitute a propeptide that is removed on maturation. Disordered stretches follow at residues 51–77 (VTEE…PKIG) and 92–111 (SGLG…PGGS). Cys80 and Cys96 are joined by a disulfide. Positions 107–111 (IPGGS) are excised as a propeptide.

The protein belongs to the natriuretic peptide family. In terms of tissue distribution, expressed by the venom gland.

It localises to the secreted. Snake venom natriuretic peptide that exhibits vasoactive and probable hypotensive activity. Is only weakly active on natriuretic peptide receptor-C (NPR3). In Oxyuranus scutellatus scutellatus (Australian taipan), this protein is Natriuretic peptide TNP-b.